Consider the following 94-residue polypeptide: ESAT-6-like protein EsxI (94 aa).

This sequence belongs to the WXG100 family. ESAT-6 subfamily.

The protein localises to the secreted. This Mycobacterium tuberculosis (strain ATCC 25618 / H37Rv) protein is ESAT-6-like protein EsxI.